Here is a 695-residue protein sequence, read N- to C-terminus: tRNA wybutosine-synthesizing protein 4 (695 aa).

S-adenosyl-L-methionine-binding positions include Lys38, Arg88, Gly115, 146-147 (DY), 196-197 (DL), and Glu224. Arg88 (proton donor; for both methylation and methoxycarbonylation activities) is an active-site residue. Tyr229 (proton acceptor; for methoxycarbonylation activity) is an active-site residue.

This sequence belongs to the methyltransferase superfamily. LCMT family.

The protein resides in the cytoplasm. Its subcellular location is the mitochondrion. It catalyses the reaction 7-[(3S)-3-amino-3-carboxypropyl]wyosine(37) in tRNA(Phe) + S-adenosyl-L-methionine = 7-[(3S)-(3-amino-3-methoxycarbonyl)propyl]wyosine(37) in tRNA(Phe) + S-adenosyl-L-homocysteine. The catalysed reaction is 7-[(3S)-(3-amino-3-methoxycarbonyl)propyl]wyosine(37) in tRNA(Phe) + S-adenosyl-L-methionine + CO2 = wybutosine(37) in tRNA(Phe) + S-adenosyl-L-homocysteine + 2 H(+). Its pathway is tRNA modification; wybutosine-tRNA(Phe) biosynthesis. S-adenosyl-L-methionine-dependent methyltransferase that acts as a component of the wybutosine biosynthesis pathway. Wybutosine is a hyper modified guanosine with a tricyclic base found at the 3'-position adjacent to the anticodon of eukaryotic phenylalanine tRNA. Catalyzes the final 2 independent reactions, methylation of the alpha-carboxy group of wybutosine-72 to form wybutosine-58, and methoxycarbonylation of alpha-amino group of wybutosine-58 through the fixation of CO(2) to complete wybutosine. This is tRNA wybutosine-synthesizing protein 4 (PPM2) from Saccharomyces cerevisiae (strain ATCC 204508 / S288c) (Baker's yeast).